The sequence spans 240 residues: Ribosomal RNA small subunit methyltransferase G (240 aa).

Residues glycine 79, phenylalanine 84, 130 to 131 (AE), and arginine 149 contribute to the S-adenosyl-L-methionine site.

The protein belongs to the methyltransferase superfamily. RNA methyltransferase RsmG family.

It is found in the cytoplasm. Specifically methylates the N7 position of a guanine in 16S rRNA. The sequence is that of Ribosomal RNA small subunit methyltransferase G from Desulforamulus reducens (strain ATCC BAA-1160 / DSM 100696 / MI-1) (Desulfotomaculum reducens).